A 164-amino-acid chain; its full sequence is Cyclic pyranopterin monophosphate synthase (164 aa).

Substrate-binding positions include 75-77 (MCH) and 116-117 (ME). Aspartate 131 is an active-site residue.

This sequence belongs to the MoaC family. Homohexamer; trimer of dimers.

The catalysed reaction is (8S)-3',8-cyclo-7,8-dihydroguanosine 5'-triphosphate = cyclic pyranopterin phosphate + diphosphate. Its pathway is cofactor biosynthesis; molybdopterin biosynthesis. Catalyzes the conversion of (8S)-3',8-cyclo-7,8-dihydroguanosine 5'-triphosphate to cyclic pyranopterin monophosphate (cPMP). The sequence is that of Cyclic pyranopterin monophosphate synthase from Staphylococcus aureus (strain MSSA476).